The sequence spans 733 residues: 1,4-alpha-glucan branching enzyme GlgB (733 aa).

Asp412 (nucleophile) is an active-site residue. Glu467 acts as the Proton donor in catalysis.

The protein belongs to the glycosyl hydrolase 13 family. GlgB subfamily. Monomer.

It carries out the reaction Transfers a segment of a (1-&gt;4)-alpha-D-glucan chain to a primary hydroxy group in a similar glucan chain.. It participates in glycan biosynthesis; glycogen biosynthesis. Functionally, catalyzes the formation of the alpha-1,6-glucosidic linkages in glycogen by scission of a 1,4-alpha-linked oligosaccharide from growing alpha-1,4-glucan chains and the subsequent attachment of the oligosaccharide to the alpha-1,6 position. This Burkholderia vietnamiensis (strain G4 / LMG 22486) (Burkholderia cepacia (strain R1808)) protein is 1,4-alpha-glucan branching enzyme GlgB.